We begin with the raw amino-acid sequence, 98 residues long: Aspartyl/glutamyl-tRNA(Asn/Gln) amidotransferase subunit C (98 aa).

The tract at residues 75 to 98 (EQALSGAPDSDDNRFKVPAILDEA) is disordered.

Belongs to the GatC family. As to quaternary structure, heterotrimer of A, B and C subunits.

The catalysed reaction is L-glutamyl-tRNA(Gln) + L-glutamine + ATP + H2O = L-glutaminyl-tRNA(Gln) + L-glutamate + ADP + phosphate + H(+). It catalyses the reaction L-aspartyl-tRNA(Asn) + L-glutamine + ATP + H2O = L-asparaginyl-tRNA(Asn) + L-glutamate + ADP + phosphate + 2 H(+). Functionally, allows the formation of correctly charged Asn-tRNA(Asn) or Gln-tRNA(Gln) through the transamidation of misacylated Asp-tRNA(Asn) or Glu-tRNA(Gln) in organisms which lack either or both of asparaginyl-tRNA or glutaminyl-tRNA synthetases. The reaction takes place in the presence of glutamine and ATP through an activated phospho-Asp-tRNA(Asn) or phospho-Glu-tRNA(Gln). This is Aspartyl/glutamyl-tRNA(Asn/Gln) amidotransferase subunit C from Pseudarthrobacter chlorophenolicus (strain ATCC 700700 / DSM 12829 / CIP 107037 / JCM 12360 / KCTC 9906 / NCIMB 13794 / A6) (Arthrobacter chlorophenolicus).